Here is an 85-residue protein sequence, read N- to C-terminus: UPF0213 protein NP_0776A (85 aa).

Residues 3-78 (ADHYVYVLSC…KSLSRAKKER (76 aa)) form the GIY-YIG domain. Residues 58–70 (KSAAMQREHEIKS) show a composition bias toward basic and acidic residues. Residues 58–85 (KSAAMQREHEIKSLSRAKKERLVADETG) form a disordered region.

Belongs to the UPF0213 family.

The protein is UPF0213 protein NP_0776A of Natronomonas pharaonis (strain ATCC 35678 / DSM 2160 / CIP 103997 / JCM 8858 / NBRC 14720 / NCIMB 2260 / Gabara) (Halobacterium pharaonis).